We begin with the raw amino-acid sequence, 506 residues long: ATP synthase subunit alpha (506 aa).

Residue 170-177 (GDRQTGKT) coordinates ATP.

Belongs to the ATPase alpha/beta chains family. As to quaternary structure, F-type ATPases have 2 components, CF(1) - the catalytic core - and CF(0) - the membrane proton channel. CF(1) has five subunits: alpha(3), beta(3), gamma(1), delta(1), epsilon(1). CF(0) has four main subunits: a(1), b(1), b'(1) and c(9-12).

Its subcellular location is the cellular thylakoid membrane. It carries out the reaction ATP + H2O + 4 H(+)(in) = ADP + phosphate + 5 H(+)(out). In terms of biological role, produces ATP from ADP in the presence of a proton gradient across the membrane. The alpha chain is a regulatory subunit. This is ATP synthase subunit alpha from Synechococcus sp. (strain JA-3-3Ab) (Cyanobacteria bacterium Yellowstone A-Prime).